A 156-amino-acid chain; its full sequence is Biotin carboxyl carrier protein of acetyl-CoA carboxylase (156 aa).

The region spanning 80-156 (GNVVRSPMVG…EFDQPLFTIV (77 aa)) is the Biotinyl-binding domain. An N6-biotinyllysine modification is found at K122.

Homodimer.

Its pathway is lipid metabolism; fatty acid biosynthesis. This protein is a component of the acetyl coenzyme A carboxylase complex; first, biotin carboxylase catalyzes the carboxylation of the carrier protein and then the transcarboxylase transfers the carboxyl group to form malonyl-CoA. This Pseudomonas aeruginosa (strain ATCC 15692 / DSM 22644 / CIP 104116 / JCM 14847 / LMG 12228 / 1C / PRS 101 / PAO1) protein is Biotin carboxyl carrier protein of acetyl-CoA carboxylase (accB).